A 247-amino-acid chain; its full sequence is NAD-dependent protein deacetylase (247 aa).

In terms of domain architecture, Deacetylase sirtuin-type spans 1 to 247; sequence MDTRKNLKEL…LGGIVEELGY (247 aa). Ala-23, Thr-27, Phe-34, Arg-35, Gln-104, Ile-106, Asp-107, and His-122 together coordinate NAD(+). Residue Phe-34 participates in nicotinamide binding. Residues Ile-106 and Asp-107 each coordinate nicotinamide. The Proton acceptor role is filled by His-122. Zn(2+) contacts are provided by Cys-130, Cys-133, Cys-152, and Cys-155. 4 residues coordinate NAD(+): Thr-193, Ser-194, Asn-216, and Ile-234.

The protein belongs to the sirtuin family. Class U subfamily. Zn(2+) serves as cofactor.

Its subcellular location is the cytoplasm. The catalysed reaction is N(6)-acetyl-L-lysyl-[protein] + NAD(+) + H2O = 2''-O-acetyl-ADP-D-ribose + nicotinamide + L-lysyl-[protein]. Its function is as follows. NAD-dependent protein deacetylase which modulates the activities of several enzymes which are inactive in their acetylated form. The chain is NAD-dependent protein deacetylase from Clostridium tetani (strain Massachusetts / E88).